Here is a 545-residue protein sequence, read N- to C-terminus: E3 ubiquitin-protein ligase ipaH9.8 (545 aa).

The tract at residues 1 to 242 (MLPINNNFSL…YHGPRIYFSM (242 aa)) is interaction with target proteins. 8 LRR repeats span residues 57–77 (NSDELRLDRLNLSSLPDNLPA), 78–99 (QITLLNVSYNQLTNLPELPVTL), 100–117 (KKLYSASNKLSELPVLPP), 118–139 (ALESLQVQHNELENLPALPDSL), 140–157 (LTMNISYNEIVSLPSLPQ), 158–179 (ALKNLRATRNFLTELPAFSEGN), 182–203 (VVREYFFDRNQISHIPESILNL), and 205–228 (NECSIHISDNPLSSHALPALQRLT). The tract at residues 243–250 (SDGQQNTL) is linker. Residues 251 to 545 (HRPLADAVTA…PENGSQLHHS (295 aa)) form an E3 ubiquitin-protein ligase catalytic domain region. One can recognise an NEL domain in the interval 253-545 (PLADAVTAWF…PENGSQLHHS (293 aa)). C337 acts as the Glycyl thioester intermediate in catalysis.

It belongs to the LRR-containing bacterial E3 ligase family. Also interacts with human and mouse U2AF1 (U2AF35). Autoubiquitinated (in vitro). Ubiquitinated in the presence of host E1 ubiquitin-activating enzyme, E2 ubiquitin-conjugating enzyme and ubiquitin.

The protein resides in the secreted. The protein localises to the host cytoplasm. Its subcellular location is the host nucleus. It carries out the reaction S-ubiquitinyl-[E2 ubiquitin-conjugating enzyme]-L-cysteine + [acceptor protein]-L-lysine = [E2 ubiquitin-conjugating enzyme]-L-cysteine + N(6)-ubiquitinyl-[acceptor protein]-L-lysine.. Its pathway is protein modification; protein ubiquitination. Its activity is regulated as follows. Exists in an autoinhibited state in the absence of substrate protein, due to interactions of the leucine-rich repeats with NEL domain. Is activated upon binding to a substrate protein. Functionally, effector E3 ubiquitin ligase that interferes with host's ubiquitination pathway and modulates the acute inflammatory responses, thus facilitating bacterial colonization within the host cell. Interacts with IKBKG (NEMO) and TNIP1 (ABIN-1), a ubiquitin-binding adapter protein, which results in TNIP1-dependent 'Lys-27'-linked polyubiquitination of IKBKG. Consequently, polyubiquitinated IKBKG undergoes proteasome-dependent degradation, which perturbs NF-kappa-B activation during bacterial infection. Mediates polyubiquitination of host U2AF1, leading to its proteasomal degradation. Catalyzes 'Lys-48'-linked polyubiquitination and subsequent degradation of a subset of host guanylate-binding proteins (GBP1, GBP2, GBP4 and GBP6), thereby suppressing host cell defense. In contrast, host GBP3 and GBP7 are not ubiquitinated by IpaH9.8. Uses UBE2D2 (UBCH5B) as an E2 ubiquitin-conjugating enzyme. The sequence is that of E3 ubiquitin-protein ligase ipaH9.8 from Shigella flexneri.